The primary structure comprises 101 residues: Replication restart protein PriB (101 aa).

The region spanning Met-1–Thr-101 is the SSB domain.

Belongs to the PriB family. Homodimer. Interacts with PriA and DnaT. Component of the replication restart primosome. Primosome assembly occurs via a 'hand-off' mechanism. PriA binds to replication forks, subsequently PriB then DnaT bind; DnaT then displaces ssDNA to generate the helicase loading substrate.

Functionally, involved in the restart of stalled replication forks, which reloads the replicative helicase on sites other than the origin of replication; the PriA-PriB pathway is the major replication restart pathway. During primosome assembly it facilitates complex formation between PriA and DnaT on DNA; stabilizes PriA on DNA. Stimulates the DNA unwinding activity of PriA helicase. This chain is Replication restart protein PriB, found in Shewanella halifaxensis (strain HAW-EB4).